The sequence spans 245 residues: tRNA pseudouridine synthase A (245 aa).

D52 acts as the Nucleophile in catalysis. Residue Y111 participates in substrate binding.

Belongs to the tRNA pseudouridine synthase TruA family. As to quaternary structure, homodimer.

It catalyses the reaction uridine(38/39/40) in tRNA = pseudouridine(38/39/40) in tRNA. Its function is as follows. Formation of pseudouridine at positions 38, 39 and 40 in the anticodon stem and loop of transfer RNAs. The chain is tRNA pseudouridine synthase A from Zymomonas mobilis subsp. mobilis (strain ATCC 31821 / ZM4 / CP4).